The chain runs to 252 residues: Chitooligosaccharide deacetylase (252 aa).

2 residues coordinate Mg(2+): H61 and H125.

It belongs to the YdjC deacetylase family. ChbG subfamily. As to quaternary structure, homodimer. It depends on Mg(2+) as a cofactor.

The protein localises to the cytoplasm. The enzyme catalyses N,N'-diacetylchitobiose + H2O = N-acetyl-beta-D-glucosaminyl-(1-&gt;4)-D-glucosamine + acetate. It carries out the reaction diacetylchitobiose-6'-phosphate + H2O = N'-monoacetylchitobiose-6'-phosphate + acetate. It functions in the pathway glycan degradation; chitin degradation. Functionally, involved in the degradation of chitin. ChbG is essential for growth on the acetylated chitooligosaccharides chitobiose and chitotriose but is dispensable for growth on cellobiose and chitosan dimer, the deacetylated form of chitobiose. Deacetylation of chitobiose-6-P and chitotriose-6-P is necessary for both the activation of the chb promoter by the regulatory protein ChbR and the hydrolysis of phosphorylated beta-glucosides by the phospho-beta-glucosidase ChbF. Catalyzes the removal of only one acetyl group from chitobiose-6-P to yield monoacetylchitobiose-6-P, the inducer of ChbR and the substrate of ChbF. This is Chitooligosaccharide deacetylase from Escherichia coli O6:K15:H31 (strain 536 / UPEC).